The primary structure comprises 393 residues: Elongation factor Tu (393 aa).

The 194-residue stretch at 10–203 folds into the tr-type G domain; it reads KPHVNIGTIG…AVDEFIPEPL (194 aa). The G1 stretch occupies residues 19–26; the sequence is GHVDHGKT. 19-26 contacts GTP; that stretch reads GHVDHGKT. Position 26 (T26) interacts with Mg(2+). A G2 region spans residues 60–64; it reads GITIS. A G3 region spans residues 81 to 84; that stretch reads DCPG. Residues 81–85 and 136–139 each bind GTP; these read DCPGH and NKVD. The segment at 136–139 is G4; sequence NKVD. Positions 173–175 are G5; that stretch reads SAL.

Belongs to the TRAFAC class translation factor GTPase superfamily. Classic translation factor GTPase family. EF-Tu/EF-1A subfamily. As to quaternary structure, monomer.

It localises to the cytoplasm. It carries out the reaction GTP + H2O = GDP + phosphate + H(+). GTP hydrolase that promotes the GTP-dependent binding of aminoacyl-tRNA to the A-site of ribosomes during protein biosynthesis. The sequence is that of Elongation factor Tu from Chlorobium phaeobacteroides (strain DSM 266 / SMG 266 / 2430).